A 253-amino-acid chain; its full sequence is Homeobox protein EMX2 (253 aa).

The homeobox DNA-binding region spans 155–214 (PKRIRTAFSPSQLLRLEHAFEKNHYVVGAERKQLAHSLSLTETQVKVWFQNRRTKFKRQK). A disordered region spans residues 213–253 (QKLEEEGSDSQQKKKGTHHINRWRIATKQASPEEIDVTSDD). Residues 225 to 234 (KKKGTHHINR) show a composition bias toward basic residues.

It belongs to the EMX homeobox family. As to quaternary structure, interacts with translation initiation factor EIF4E.

It is found in the nucleus. The protein localises to the cell projection. The protein resides in the axon. Functionally, transcription factor, which in cooperation with EMX1, acts to generate the boundary between the roof and archipallium in the developing brain. May function in combination with OTX1/2 to specify cell fates in the developing central nervous system. In the inner ear, it controls the distribution of GPR156 at hair cell boundaries, and regulates the organization of stereociliary bundles in opposite orientations across the line of polarity reversal (LPR). The sequence is that of Homeobox protein EMX2 (EMX2) from Bos taurus (Bovine).